Consider the following 314-residue polypeptide: GMP synthase [glutamine-hydrolyzing] subunit B (314 aa).

A GMPS ATP-PPase domain is found at 2 to 186 (FDPKKFVEEA…LGIPDEIVER (185 aa)). 29–35 (SGGVDST) lines the ATP pocket.

In terms of assembly, heterodimer composed of a glutamine amidotransferase subunit (A) and a GMP-binding subunit (B).

It carries out the reaction XMP + L-glutamine + ATP + H2O = GMP + L-glutamate + AMP + diphosphate + 2 H(+). The protein operates within purine metabolism; GMP biosynthesis; GMP from XMP (L-Gln route): step 1/1. Catalyzes the synthesis of GMP from XMP. This Methanopyrus kandleri (strain AV19 / DSM 6324 / JCM 9639 / NBRC 100938) protein is GMP synthase [glutamine-hydrolyzing] subunit B (guaAB).